A 203-amino-acid polypeptide reads, in one-letter code: NADH-quinone oxidoreductase subunit C (203 aa).

Belongs to the complex I 30 kDa subunit family. NDH-1 is composed of 14 different subunits. Subunits NuoB, C, D, E, F, and G constitute the peripheral sector of the complex.

It localises to the cell inner membrane. It catalyses the reaction a quinone + NADH + 5 H(+)(in) = a quinol + NAD(+) + 4 H(+)(out). Its function is as follows. NDH-1 shuttles electrons from NADH, via FMN and iron-sulfur (Fe-S) centers, to quinones in the respiratory chain. The immediate electron acceptor for the enzyme in this species is believed to be ubiquinone. Couples the redox reaction to proton translocation (for every two electrons transferred, four hydrogen ions are translocated across the cytoplasmic membrane), and thus conserves the redox energy in a proton gradient. This Bartonella tribocorum (strain CIP 105476 / IBS 506) protein is NADH-quinone oxidoreductase subunit C.